We begin with the raw amino-acid sequence, 381 residues long: Homoserine O-succinyltransferase (381 aa).

Residues 45-360 (NAVLVCHALN…PHGHDAFLLD (316 aa)) form the AB hydrolase-1 domain. Ser151 serves as the catalytic Nucleophile. Arg221 is a binding site for substrate. Catalysis depends on residues Asp321 and His354. Substrate is bound at residue Asp355.

It belongs to the AB hydrolase superfamily. MetX family. Homodimer.

It localises to the cytoplasm. The enzyme catalyses L-homoserine + succinyl-CoA = O-succinyl-L-homoserine + CoA. Its pathway is amino-acid biosynthesis; L-methionine biosynthesis via de novo pathway; O-succinyl-L-homoserine from L-homoserine: step 1/1. Its function is as follows. Transfers a succinyl group from succinyl-CoA to L-homoserine, forming succinyl-L-homoserine. In Burkholderia thailandensis (strain ATCC 700388 / DSM 13276 / CCUG 48851 / CIP 106301 / E264), this protein is Homoserine O-succinyltransferase.